A 204-amino-acid chain; its full sequence is Tetraspanin-13 (204 aa).

The Cytoplasmic portion of the chain corresponds to Met1–Leu19. A helical transmembrane segment spans residues Tyr20 to Ile40. The Extracellular segment spans residues Ser41 to Arg44. The helical transmembrane segment at Val45–Ile65 threads the bilayer. The Cytoplasmic portion of the chain corresponds to Gly66 to Gln72. Residues Val73 to Ser93 form a helical membrane-spanning segment. Over Cys94–Arg167 the chain is Extracellular. N-linked (GlcNAc...) asparagine glycosylation is found at Asn113 and Asn137. Ser143 bears the Phosphoserine mark. A helical membrane pass occupies residues Phe168–Tyr188. The Cytoplasmic portion of the chain corresponds to Arg189–Leu204.

It belongs to the tetraspanin (TM4SF) family.

It is found in the membrane. The chain is Tetraspanin-13 (Tspan13) from Mus musculus (Mouse).